Reading from the N-terminus, the 164-residue chain is Probable Brix domain-containing ribosomal biogenesis protein (164 aa).

A Brix domain is found at methionine 1–glutamate 164.

In terms of biological role, probably involved in the biogenesis of the ribosome. The polypeptide is Probable Brix domain-containing ribosomal biogenesis protein (Methanococcus maripaludis (strain DSM 14266 / JCM 13030 / NBRC 101832 / S2 / LL)).